Consider the following 330-residue polypeptide: Diacylglycerol acyltransferase/mycolyltransferase Ag85B (330 aa).

The N-terminal stretch at 1–40 (MTDLSKKVRAWGRRLLVGTAAAVTLPGLIGLAGGAPTAGA) is a signal peptide. 82-83 (LR) is a binding site for substrate. Residues 98-108 (FEWYYQSGLSI) form a fibronectin-binding region. A disulfide bond links cysteine 127 and cysteine 132. Serine 166 and aspartate 194 together coordinate substrate. The Nucleophile role is filled by serine 166. Residue glutamate 270 is part of the active site. Substrate contacts are provided by residues 272 to 275 (FVRS), lysine 279, and 302 to 304 (HSW). Histidine 302 is a catalytic residue.

The protein belongs to the mycobacterial A85 antigen family.

The protein resides in the secreted. The enzyme catalyses 2 alpha,alpha'-trehalose 6-mycolate = alpha,alpha'-trehalose 6,6'-bismycolate + alpha,alpha-trehalose. It catalyses the reaction an acyl-CoA + a 1,2-diacyl-sn-glycerol = a triacyl-sn-glycerol + CoA. Functionally, the antigen 85 proteins (FbpA, FbpB, FbpC) are responsible for the high affinity of mycobacteria for fibronectin, a large adhesive glycoprotein, which facilitates the attachment of M.tuberculosis to murine alveolar macrophages (AMs). They also help to maintain the integrity of the cell wall by catalyzing the transfer of mycolic acids to cell wall arabinogalactan and through the synthesis of alpha,alpha-trehalose dimycolate (TDM, cord factor). They catalyze the transfer of a mycoloyl residue from one molecule of alpha,alpha-trehalose monomycolate (TMM) to another TMM, leading to the formation of TDM. The protein is Diacylglycerol acyltransferase/mycolyltransferase Ag85B (fbpB) of Mycobacterium scrofulaceum.